The following is a 658-amino-acid chain: ATP-dependent RNA helicase MSS116, mitochondrial (658 aa).

The transit peptide at 1–35 (MFRVTGIATARAVALQPFRAPLGVIRRFGISATAS) directs the protein to the mitochondrion. Basic and acidic residues predominate over residues 40–79 (HGHDMQSRNGSRWDSRRQGDRRSSRWEGRGSDREDGERGS). The disordered stretch occupies residues 40–104 (HGHDMQSRNG…DGAAREGFSL (65 aa)). The Q motif motif lies at 126–154 (TLVEEGVLSNELYEMLQSRGFDKLTPVQQ). Positions 158 to 343 (KPILQTEHDV…NSIMNHAKCL (186 aa)) constitute a Helicase ATP-binding domain. 171–178 (AKTGTGKT) serves as a coordination point for ATP. A DEAD box motif is present at residues 284 to 287 (DEAD). In terms of domain architecture, Helicase C-terminal spans 372 to 528 (NITASLYKIR…TFDAAAQELS (157 aa)).

The protein belongs to the DEAD box helicase family. DDX18/HAS1 subfamily.

Its subcellular location is the mitochondrion matrix. It catalyses the reaction ATP + H2O = ADP + phosphate + H(+). ATP-dependent RNA helicase required for mitochondrial splicing of group I and II introns. Also required for efficient mitochondrial translation. The sequence is that of ATP-dependent RNA helicase MSS116, mitochondrial (MSS116) from Eremothecium gossypii (strain ATCC 10895 / CBS 109.51 / FGSC 9923 / NRRL Y-1056) (Yeast).